The chain runs to 172 residues: Disulfide bond formation protein B (172 aa).

Over 1-11 (MNPFRWGFRAQ) the chain is Cytoplasmic. The helical transmembrane segment at 12–28 (FLLGFLACAGLLAYAIY) threads the bilayer. Topologically, residues 29-46 (VQLHLGLEPCPLCIFQRI) are periplasmic. Cys38 and Cys41 form a disulfide bridge. Residues 47–63 (AFATLALLFLLGALHGP) form a helical membrane-spanning segment. At 64–70 (RGAGGRK) the chain is on the cytoplasmic side. Residues 71–88 (AYGVLAFIAAGVGMGIAA) traverse the membrane as a helical segment. The Periplasmic segment spans residues 89–145 (RHVWVQIRPKDMMSSCGPPLSFLSETMGPFEVFRTVLTGTGDCGNIDWRFLGLSMPM). A disulfide bridge connects residues Cys104 and Cys131. Residues 146 to 164 (WSMVWFVGLALWALYAGFK) form a helical membrane-spanning segment. Topologically, residues 165-172 (HRGPRKLF) are cytoplasmic.

It belongs to the DsbB family.

Its subcellular location is the cell inner membrane. In terms of biological role, required for disulfide bond formation in some periplasmic proteins. Acts by oxidizing the DsbA protein. The protein is Disulfide bond formation protein B of Xanthomonas campestris pv. campestris (strain 8004).